The sequence spans 60 residues: Metallothionein B (60 aa).

A beta region spans residues 1–28 (MDPCECSKSGTCNCGGSCTCTNCSCTSC). A divalent metal cation contacts are provided by cysteine 4, cysteine 6, cysteine 12, cysteine 14, cysteine 18, cysteine 20, cysteine 23, cysteine 25, cysteine 28, cysteine 32, cysteine 33, cysteine 35, cysteine 36, cysteine 40, cysteine 43, cysteine 47, cysteine 49, cysteine 54, cysteine 58, and cysteine 59. Residues 29-60 (KKSCCPCCPSGCTKCASGCVCKGKTCDTSCCQ) form an alpha region.

This sequence belongs to the metallothionein superfamily. Type 1 family.

In terms of biological role, metallothioneins have a high content of cysteine residues that bind various heavy metals. This chain is Metallothionein B (mtb), found in Trematomus bernacchii (Emerald rockcod).